The following is a 273-amino-acid chain: 4-hydroxy-tetrahydrodipicolinate reductase (273 aa).

Residues 12 to 17 and glutamate 38 each bind NAD(+); that span reads GAGGRM. Residue arginine 39 coordinates NADP(+). NAD(+)-binding positions include 102-104 and 126-129; these read GTT and AANF. Histidine 159 functions as the Proton donor/acceptor in the catalytic mechanism. Residue histidine 160 coordinates (S)-2,3,4,5-tetrahydrodipicolinate. Lysine 163 (proton donor) is an active-site residue. Residue 169-170 participates in (S)-2,3,4,5-tetrahydrodipicolinate binding; it reads GT.

The protein belongs to the DapB family. Homotetramer.

Its subcellular location is the cytoplasm. The catalysed reaction is (S)-2,3,4,5-tetrahydrodipicolinate + NAD(+) + H2O = (2S,4S)-4-hydroxy-2,3,4,5-tetrahydrodipicolinate + NADH + H(+). The enzyme catalyses (S)-2,3,4,5-tetrahydrodipicolinate + NADP(+) + H2O = (2S,4S)-4-hydroxy-2,3,4,5-tetrahydrodipicolinate + NADPH + H(+). It participates in amino-acid biosynthesis; L-lysine biosynthesis via DAP pathway; (S)-tetrahydrodipicolinate from L-aspartate: step 4/4. In terms of biological role, catalyzes the conversion of 4-hydroxy-tetrahydrodipicolinate (HTPA) to tetrahydrodipicolinate. In Proteus mirabilis (strain HI4320), this protein is 4-hydroxy-tetrahydrodipicolinate reductase.